The primary structure comprises 407 residues: Tyrosine--tRNA ligase (407 aa).

Tyr-35 contributes to the L-tyrosine binding site. The 'HIGH' region motif lies at Pro-40 to His-49. L-tyrosine contacts are provided by Tyr-168 and Gln-172. The short motif at Lys-228–Thr-232 is the 'KMSKS' region element. Residue Lys-231 participates in ATP binding. Positions Asn-341–Val-405 constitute an S4 RNA-binding domain.

This sequence belongs to the class-I aminoacyl-tRNA synthetase family. TyrS type 1 subfamily. As to quaternary structure, homodimer.

It is found in the cytoplasm. It carries out the reaction tRNA(Tyr) + L-tyrosine + ATP = L-tyrosyl-tRNA(Tyr) + AMP + diphosphate + H(+). Catalyzes the attachment of tyrosine to tRNA(Tyr) in a two-step reaction: tyrosine is first activated by ATP to form Tyr-AMP and then transferred to the acceptor end of tRNA(Tyr). The polypeptide is Tyrosine--tRNA ligase (Clostridium botulinum (strain ATCC 19397 / Type A)).